Consider the following 91-residue polypeptide: Cell division topological specificity factor (91 aa).

This sequence belongs to the MinE family.

In terms of biological role, prevents the cell division inhibition by proteins MinC and MinD at internal division sites while permitting inhibition at polar sites. This ensures cell division at the proper site by restricting the formation of a division septum at the midpoint of the long axis of the cell. The sequence is that of Cell division topological specificity factor from Chloroflexus aurantiacus (strain ATCC 29366 / DSM 635 / J-10-fl).